Here is a 205-residue protein sequence, read N- to C-terminus: Golgi to ER traffic protein 1 (205 aa).

The Lumenal segment spans residues 1–9; the sequence is MFELQPSSI. A helical transmembrane segment spans residues 10–29; it reads VVLVFCVLAIKVCISLIGKT. At 30-116 the chain is on the cytoplasmic side; the sequence is TIQDRIWYLY…QISKLVNLAI (87 aa). A coiled-coil region spans residues 53 to 103; that stretch reads ALAQKREELVRVNKERRAISAQDEYAKWTKLNRQFDKLNSEVNDLAEATSS. The chain crosses the membrane as a helical span at residues 117–137; that stretch reads AATTTAPIWFSRIWYRKVVLF. Over 138 to 161 the chain is Lumenal; it reads YLPPKVFPYYIEWVLALPFIVTGG. The chain crosses the membrane as a helical span at residues 162–178; sequence VGLTVWMFALNSVLSSL. Topologically, residues 179–205 are cytoplasmic; it reads EFLIKFYLEEPVKKPEAPAASEAQTKQ.

Belongs to the WRB/GET1 family. As to quaternary structure, component of the Golgi to ER traffic (GET) complex, which is composed of GET1, GET2 and GET3. Within the complex, GET1 and GET2 form a heterotetramer which is stabilized by phosphatidylinositol binding and which binds to the GET3 homodimer.

It is found in the endoplasmic reticulum membrane. The protein localises to the golgi apparatus membrane. Its function is as follows. Required for the post-translational delivery of tail-anchored (TA) proteins to the endoplasmic reticulum. Together with GET2, acts as a membrane receptor for soluble GET3, which recognizes and selectively binds the transmembrane domain of TA proteins in the cytosol. The GET complex cooperates with the HDEL receptor ERD2 to mediate the ATP-dependent retrieval of resident ER proteins that contain a C-terminal H-D-E-L retention signal from the Golgi to the ER. This is Golgi to ER traffic protein 1 from Clavispora lusitaniae (strain ATCC 42720) (Yeast).